The primary structure comprises 73 residues: MNPTKRNSHAIVEFVDVLLRDGAVIQADAIVTVAGVPLLGISLRAAIAGMTTMTEYGIFDGWDADHRRRNAQP.

It belongs to the gas vesicle GvpA family. As to quaternary structure, gvpF to GvpM interact with each other in vitro, and may form multi-subunit complex(es). Might interact with GvpA.

It localises to the gas vesicle. Its function is as follows. Proteins GvpF to GvpM might be involved in nucleating gas vesicle formation. A minor component of the gas vesicle. Gas vesicles are hollow, gas filled proteinaceous nanostructures found in several microbial planktonic microorganisms. They allow positioning of halobacteria at the optimal depth for growth in the poorly aerated, shallow brine pools of their habitat. Expression of 2 c-vac DNA fragments containing 2 divergently transcribed regions (gvpE-gvpF-gvpG-gvpH-gvpI-gvpJ-gvpK-gvpL-gvpM and gvpA-gvpC-gvpN-gvpO) allows H.volcanii to produce gas vesicles. The protein is Gas vesicle protein M2 of Halobacterium salinarum (strain ATCC 700922 / JCM 11081 / NRC-1) (Halobacterium halobium).